The sequence spans 625 residues: Mesothelin (625 aa).

A signal peptide spans 1 to 35; it reads MALPTARPLLGSCGSPICSRSFLLLLLSLGWIPRL. Asparagine 93 carries N-linked (GlcNAc...) asparagine glycosylation. The residue at position 202 (serine 202) is a Phosphoserine. Cysteine 304 and cysteine 328 are disulfide-bonded. Residues asparagine 390, asparagine 488, and asparagine 517 are each glycosylated (N-linked (GlcNAc...) asparagine). Serine 600 carries GPI-anchor amidated serine lipidation. The propeptide at 601-625 is removed in mature form; it reads SRASLLGPGFVLIWIPALLPALRLS.

Belongs to the mesothelin family. As to quaternary structure, interacts with MUC16. In terms of processing, proteolytically cleaved by a furin-like convertase to generate megakaryocyte-potentiating factor (MPF), and the cleaved form of mesothelin. As to expression, highly expressed in lung and heart. Expressed at low levels in spleen, liver, kidney and testis. Present in lung (at protein level).

It localises to the cell membrane. The protein resides in the golgi apparatus. The protein localises to the secreted. Its function is as follows. Membrane-anchored forms may play a role in cellular adhesion. Megakaryocyte-potentiating factor (MPF) may potentiate megakaryocyte colony formation. This Mus musculus (Mouse) protein is Mesothelin (Msln).